The sequence spans 288 residues: Translocon-associated protein subunit alpha (288 aa).

An N-terminal signal peptide occupies residues 1-28; the sequence is MFNFGSKILVLFLVAFPCGLISFGRVSA. Residues 29-208 are Lumenal-facing; sequence DSESAEDIFP…ELEEGLDGET (180 aa). Positions 34-69 are disordered; that stretch reads EDIFPDSTVDEEEEEEEDEVLVEEDQVPGSETEDDI. 2 N-linked (GlcNAc...) asparagine glycosylation sites follow: Asn-137 and Asn-192. The helical transmembrane segment at 209 to 229 threads the bilayer; that stretch reads IFMYIFLTGLVVLAVFGMYQV. The Cytoplasmic segment spans residues 230-288; that stretch reads LESRTRKRFPVKVETGTGGMNGVDISWIPQETLNIMSKASASPKASPRKRTKRAVGVDQ. The interval 267 to 288 is disordered; the sequence is KASASPKASPRKRTKRAVGVDQ.

This sequence belongs to the TRAP-alpha family. Heterotetramer of TRAP-alpha, TRAP-beta, TRAP-delta and TRAP-gamma. Phosphorylated in its cytoplasmic tail.

The protein localises to the endoplasmic reticulum membrane. Its function is as follows. TRAP proteins are part of a complex whose function is to bind calcium to the ER membrane and thereby regulate the retention of ER resident proteins. May be involved in the recycling of the translocation apparatus after completion of the translocation process or may function as a membrane-bound chaperone facilitating folding of translocated proteins. This is Translocon-associated protein subunit alpha (ssr1) from Oncorhynchus mykiss (Rainbow trout).